Here is a 72-residue protein sequence, read N- to C-terminus: UPF0352 protein swp_2271 (72 aa).

It belongs to the UPF0352 family.

This chain is UPF0352 protein swp_2271, found in Shewanella piezotolerans (strain WP3 / JCM 13877).